The sequence spans 451 residues: 3-phosphoshikimate 1-carboxyvinyltransferase (451 aa).

Lysine 30, serine 31, and arginine 35 together coordinate 3-phosphoshikimate. A phosphoenolpyruvate-binding site is contributed by lysine 30. Glycine 103 and arginine 131 together coordinate phosphoenolpyruvate. 3-phosphoshikimate-binding residues include serine 176, glutamine 178, aspartate 329, and lysine 356. A phosphoenolpyruvate-binding site is contributed by glutamine 178. The active-site Proton acceptor is the aspartate 329. Arginine 360 and arginine 404 together coordinate phosphoenolpyruvate.

This sequence belongs to the EPSP synthase family. As to quaternary structure, monomer.

The protein resides in the cytoplasm. The enzyme catalyses 3-phosphoshikimate + phosphoenolpyruvate = 5-O-(1-carboxyvinyl)-3-phosphoshikimate + phosphate. It participates in metabolic intermediate biosynthesis; chorismate biosynthesis; chorismate from D-erythrose 4-phosphate and phosphoenolpyruvate: step 6/7. Catalyzes the transfer of the enolpyruvyl moiety of phosphoenolpyruvate (PEP) to the 5-hydroxyl of shikimate-3-phosphate (S3P) to produce enolpyruvyl shikimate-3-phosphate and inorganic phosphate. The sequence is that of 3-phosphoshikimate 1-carboxyvinyltransferase from Parvibaculum lavamentivorans (strain DS-1 / DSM 13023 / NCIMB 13966).